Reading from the N-terminus, the 206-residue chain is 2,3-bisphosphoglycerate-dependent phosphoglycerate mutase (206 aa).

Substrate contacts are provided by residues 9-16, 22-23, Arg61, 88-91, Lys99, 115-116, and 159-160; these read RHGQSEWN, TG, ERDY, RR, and GN. His10 (tele-phosphohistidine intermediate) is an active-site residue. The Proton donor/acceptor role is filled by Glu88.

It belongs to the phosphoglycerate mutase family. BPG-dependent PGAM subfamily. Homodimer.

The enzyme catalyses (2R)-2-phosphoglycerate = (2R)-3-phosphoglycerate. It functions in the pathway carbohydrate degradation; glycolysis; pyruvate from D-glyceraldehyde 3-phosphate: step 3/5. Catalyzes the interconversion of 2-phosphoglycerate and 3-phosphoglycerate. The protein is 2,3-bisphosphoglycerate-dependent phosphoglycerate mutase of Brucella abortus (strain S19).